Reading from the N-terminus, the 237-residue chain is LexA repressor (237 aa).

A DNA-binding region (H-T-H motif) is located at residues 26–46; the sequence is FDEMKEALDLRSKSGIHRLIT. Residues serine 158 and lysine 196 each act as for autocatalytic cleavage activity in the active site.

Belongs to the peptidase S24 family. As to quaternary structure, homodimer.

The enzyme catalyses Hydrolysis of Ala-|-Gly bond in repressor LexA.. Functionally, represses a number of genes involved in the response to DNA damage (SOS response), including recA and lexA. In the presence of single-stranded DNA, RecA interacts with LexA causing an autocatalytic cleavage which disrupts the DNA-binding part of LexA, leading to derepression of the SOS regulon and eventually DNA repair. This chain is LexA repressor, found in Xanthobacter autotrophicus (strain ATCC BAA-1158 / Py2).